Consider the following 490-residue polypeptide: Betaine aldehyde dehydrogenase (490 aa).

The K(+) site is built by Thr-26, Ile-27, and Asp-93. Position 150 to 152 (150 to 152) interacts with NAD(+); that stretch reads GAW. The active-site Charge relay system is the Lys-162. 176 to 179 is a binding site for NAD(+); it reads KPSE. Val-180 contributes to the K(+) binding site. Residue 230–233 coordinates NAD(+); it reads GVAS. Residue Leu-246 participates in K(+) binding. The Proton acceptor role is filled by Glu-252. 3 residues coordinate NAD(+): Gly-254, Cys-286, and Glu-387. Residue Cys-286 is the Nucleophile of the active site. Cys-286 bears the Cysteine sulfenic acid (-SOH) mark. K(+) contacts are provided by Lys-457 and Gly-460. Glu-464 functions as the Charge relay system in the catalytic mechanism.

The protein belongs to the aldehyde dehydrogenase family. Dimer of dimers. The cofactor is K(+).

The catalysed reaction is betaine aldehyde + NAD(+) + H2O = glycine betaine + NADH + 2 H(+). Its pathway is amine and polyamine biosynthesis; betaine biosynthesis via choline pathway; betaine from betaine aldehyde: step 1/1. In terms of biological role, involved in the biosynthesis of the osmoprotectant glycine betaine. Catalyzes the irreversible oxidation of betaine aldehyde to the corresponding acid. The protein is Betaine aldehyde dehydrogenase of Escherichia coli (strain K12 / DH10B).